The sequence spans 512 residues: GMP synthase [glutamine-hydrolyzing] (512 aa).

Residues 6-195 (KIIILDFGSQ…VFNICGCQPK (190 aa)) enclose the Glutamine amidotransferase type-1 domain. Cysteine 83 (nucleophile) is an active-site residue. Catalysis depends on residues histidine 169 and glutamate 171. The region spanning 196–387 (WKITEFISAA…LGIDFKFVYK (192 aa)) is the GMPS ATP-PPase domain. 223-229 (SGGVDSS) serves as a coordination point for ATP.

Homodimer.

It carries out the reaction XMP + L-glutamine + ATP + H2O = GMP + L-glutamate + AMP + diphosphate + 2 H(+). Its pathway is purine metabolism; GMP biosynthesis; GMP from XMP (L-Gln route): step 1/1. Catalyzes the synthesis of GMP from XMP. This chain is GMP synthase [glutamine-hydrolyzing], found in Spiroplasma kunkelii.